Here is a 106-residue protein sequence, read N- to C-terminus: Prothymosin alpha-B (106 aa).

The segment covering 1–39 (MADAKVDSATEISAKDLKEKKLIEEKENGKDATNGKENE) has biased composition (basic and acidic residues). The segment at 1–106 (MADAKVDSAT…DVDPKKQKVN (106 aa)) is disordered. S8 bears the Phosphoserine mark. T10 is modified (phosphothreonine). Composition is skewed to acidic residues over residues 40-76 (ENGE…DEDL) and 85-98 (DDDE…EDDV).

The protein belongs to the pro/parathymosin family. In terms of tissue distribution, uniformly expressed in all embryonic cells at 4 and 8 hpf. At the 20-somite stage (18 hpf), ubiquitously expressed in the developing nervous system, in the tail bud and in the pronephric ducts. Also expressed in some placodes, including the anterior lateral line placode, otic vesicle and olfactory placode. At 27 hpf, strong expression persists in the central nervous system and the olfactory placode. Expressed strongly in the eyes and the pectoral fin buds. In the tail region, expressed in the spinal cord, in the posterior lateral line precursors, and persists in the pronephric ducts. At 48 hpf, expressed in all head territories including the developing brain, eyes, and pharyngeal arches. More caudally, expression persists in the pectoral fin buds, the spinal cord and, for the first time, appears in the intestine. At 72 hpf, expressed only in restricted regions of the brain, in pharyngeal arches region and in the amacrine cells and the horizontal cells of the retina.

Its subcellular location is the nucleus. The protein is Prothymosin alpha-B of Danio rerio (Zebrafish).